The sequence spans 99 residues: Large ribosomal subunit protein eL36A (99 aa).

This sequence belongs to the eukaryotic ribosomal protein eL36 family. In terms of assembly, component of the large ribosomal subunit (LSU). Mature yeast ribosomes consist of a small (40S) and a large (60S) subunit. The 40S small subunit contains 1 molecule of ribosomal RNA (18S rRNA) and at least 33 different proteins. The large 60S subunit contains 3 rRNA molecules (25S, 5.8S and 5S rRNA) and at least 46 different proteins.

Its subcellular location is the cytoplasm. Functionally, component of the ribosome, a large ribonucleoprotein complex responsible for the synthesis of proteins in the cell. The small ribosomal subunit (SSU) binds messenger RNAs (mRNAs) and translates the encoded message by selecting cognate aminoacyl-transfer RNA (tRNA) molecules. The large subunit (LSU) contains the ribosomal catalytic site termed the peptidyl transferase center (PTC), which catalyzes the formation of peptide bonds, thereby polymerizing the amino acids delivered by tRNAs into a polypeptide chain. The nascent polypeptides leave the ribosome through a tunnel in the LSU and interact with protein factors that function in enzymatic processing, targeting, and the membrane insertion of nascent chains at the exit of the ribosomal tunnel. This is Large ribosomal subunit protein eL36A (rpl3601) from Schizosaccharomyces pombe (strain 972 / ATCC 24843) (Fission yeast).